Reading from the N-terminus, the 232-residue chain is 2,3,4,5-tetrahydropyridine-2,6-dicarboxylate N-acetyltransferase (232 aa).

The protein belongs to the transferase hexapeptide repeat family. DapH subfamily.

It carries out the reaction (S)-2,3,4,5-tetrahydrodipicolinate + acetyl-CoA + H2O = L-2-acetamido-6-oxoheptanedioate + CoA. It functions in the pathway amino-acid biosynthesis; L-lysine biosynthesis via DAP pathway; LL-2,6-diaminopimelate from (S)-tetrahydrodipicolinate (acetylase route): step 1/3. Its function is as follows. Catalyzes the transfer of an acetyl group from acetyl-CoA to tetrahydrodipicolinate. The protein is 2,3,4,5-tetrahydropyridine-2,6-dicarboxylate N-acetyltransferase of Streptococcus sanguinis (strain SK36).